We begin with the raw amino-acid sequence, 322 residues long: 4-diphosphocytidyl-2-C-methyl-D-erythritol kinase (322 aa).

Residue K18 is part of the active site. 130–140 (PMGAGLGGGSS) is a binding site for ATP. D172 is a catalytic residue.

The protein belongs to the GHMP kinase family. IspE subfamily.

The enzyme catalyses 4-CDP-2-C-methyl-D-erythritol + ATP = 4-CDP-2-C-methyl-D-erythritol 2-phosphate + ADP + H(+). It participates in isoprenoid biosynthesis; isopentenyl diphosphate biosynthesis via DXP pathway; isopentenyl diphosphate from 1-deoxy-D-xylulose 5-phosphate: step 3/6. In terms of biological role, catalyzes the phosphorylation of the position 2 hydroxy group of 4-diphosphocytidyl-2C-methyl-D-erythritol. This chain is 4-diphosphocytidyl-2-C-methyl-D-erythritol kinase, found in Psychrobacter cryohalolentis (strain ATCC BAA-1226 / DSM 17306 / VKM B-2378 / K5).